The primary structure comprises 78 residues: Large ribosomal subunit protein bL28 (78 aa).

A disordered region spans residues 1–23 (MSRICQITGKKPLSGNKRSHSMN).

Belongs to the bacterial ribosomal protein bL28 family.

The chain is Large ribosomal subunit protein bL28 from Wigglesworthia glossinidia brevipalpis.